A 168-amino-acid chain; its full sequence is Coiled-coil domain-containing protein 200 (168 aa).

Residues 16–50 adopt a coiled-coil conformation; sequence LDRRRWLMAQQQQELQQKEQELKNHQEEEQQSEEK. The segment at 23 to 168 is disordered; that stretch reads MAQQQQELQQ…LKSTNYIQQW (146 aa). The span at 31 to 52 shows a compositional bias: basic and acidic residues; that stretch reads QQKEQELKNHQEEEQQSEEKLQ. The segment covering 70 to 82 has biased composition (low complexity); that stretch reads SQEQPQPSQQQPS. Composition is skewed to pro residues over residues 83-94 and 104-117; these read VQPPSQPPPQPS and GPQP…PQPT. Composition is skewed to polar residues over residues 124-138 and 145-168; these read RCTQ…QDSQ and PCQS…IQQW.

This is Coiled-coil domain-containing protein 200 from Homo sapiens (Human).